We begin with the raw amino-acid sequence, 147 residues long: Large ribosomal subunit protein uL15 (147 aa).

The disordered stretch occupies residues 1-55 (MKLDNLAPQPGAKKRKRRVGRGIAAGQGASCGFGMRGQKSRSGRPTRPGFEGGQM). Residues 23-35 (IAAGQGASCGFGM) show a composition bias toward gly residues.

The protein belongs to the universal ribosomal protein uL15 family. Part of the 50S ribosomal subunit.

Functionally, binds to the 23S rRNA. In Synechococcus elongatus (strain ATCC 33912 / PCC 7942 / FACHB-805) (Anacystis nidulans R2), this protein is Large ribosomal subunit protein uL15.